Here is a 798-residue protein sequence, read N- to C-terminus: Penicillin-binding protein 1A (798 aa).

The Cytoplasmic portion of the chain corresponds to 2–9 (IKKILTTC). A helical; Signal-anchor for type II membrane protein transmembrane segment spans residues 10-30 (FGLFFGFCVFGVGLVAIAILV). Residues 31–798 (TYPKLPSLDS…SKQQQLDSLF (768 aa)) lie on the Periplasmic side of the membrane. Residues 50 to 218 (LTIYSADGEV…SAYNPIVNPE (169 aa)) are transglycosylase. The Proton donor; for transglycosylase activity role is filled by glutamate 88. Positions 378-700 (RRALGFAARA…GTIAVPVWVD (323 aa)) are transpeptidase. The active-site Acyl-ester intermediate; for transpeptidase activity is the serine 461. Positions 739–798 (LMLDNSGIAPQPSRRAKEDDEAAVENEQQGRSDETRQDVQETPVLPSNTDSKQQQLDSLF) are disordered. Basic and acidic residues predominate over residues 766-777 (QQGRSDETRQDV). Polar residues predominate over residues 783–798 (LPSNTDSKQQQLDSLF).

In the N-terminal section; belongs to the glycosyltransferase 51 family. The protein in the C-terminal section; belongs to the transpeptidase family.

The protein localises to the cell inner membrane. It carries out the reaction [GlcNAc-(1-&gt;4)-Mur2Ac(oyl-L-Ala-gamma-D-Glu-L-Lys-D-Ala-D-Ala)](n)-di-trans,octa-cis-undecaprenyl diphosphate + beta-D-GlcNAc-(1-&gt;4)-Mur2Ac(oyl-L-Ala-gamma-D-Glu-L-Lys-D-Ala-D-Ala)-di-trans,octa-cis-undecaprenyl diphosphate = [GlcNAc-(1-&gt;4)-Mur2Ac(oyl-L-Ala-gamma-D-Glu-L-Lys-D-Ala-D-Ala)](n+1)-di-trans,octa-cis-undecaprenyl diphosphate + di-trans,octa-cis-undecaprenyl diphosphate + H(+). The enzyme catalyses Preferential cleavage: (Ac)2-L-Lys-D-Ala-|-D-Ala. Also transpeptidation of peptidyl-alanyl moieties that are N-acyl substituents of D-alanine.. Its pathway is cell wall biogenesis; peptidoglycan biosynthesis. Cell wall formation. Synthesis of cross-linked peptidoglycan from the lipid intermediates. The enzyme has a penicillin-insensitive transglycosylase N-terminal domain (formation of linear glycan strands) and a penicillin-sensitive transpeptidase C-terminal domain (cross-linking of the peptide subunits). Essential for cell wall synthesis. The polypeptide is Penicillin-binding protein 1A (mrcA) (Neisseria gonorrhoeae (strain ATCC 700825 / FA 1090)).